The following is a 117-amino-acid chain: DNA-binding protein MK1619 (117 aa).

It belongs to the PDCD5 family.

The polypeptide is DNA-binding protein MK1619 (Methanopyrus kandleri (strain AV19 / DSM 6324 / JCM 9639 / NBRC 100938)).